The chain runs to 172 residues: Centrin-2 (172 aa).

The disordered stretch occupies residues 1–31 (MASNFKKANMASTTQRKRMSPKPELTEEQKQ). N-acetylalanine is present on A2. The tract at residues 2 to 25 (ASNFKKANMASTTQRKRMSPKPEL) is required for self-assembly. Residue S20 is modified to Phosphoserine. K22 is covalently cross-linked (Glycyl lysine isopeptide (Lys-Gly) (interchain with G-Cter in SUMO2)). Position 26 is a phosphothreonine (T26). EF-hand domains lie at 28–63 (EQKQ…LGFE), 64–99 (PKKE…KMSE), 101–136 (DTKE…LGEN), and 137–172 (LSDE…TSLY). 5 residues coordinate Ca(2+): D41, D43, T45, T47, and E52. Residues D150, D152, D154, E156, and E161 each coordinate Ca(2+).

It belongs to the centrin family. In terms of assembly, monomer. Homooligomer. Interacts with CCP110, SFI1. Component of the XPC complex composed of XPC, RAD23B and CETN2. Component of the nuclear pore complex (NPC)-associated TREX-2 complex (transcription and export complex 2), composed of at least GANP, 2 copies of ENY2, PCID2, SEM1/DSS1, and either centrin CETN2 or centrin CETN3. The TREX-2 complex also associates with ALYREF/ALY and with the nucleoporin NUP153. Interacts with USP49. Forms a microtubule-associated complex with POC5, POC1B and FAM161A. Interacts with CCDC15.

Its subcellular location is the cytoplasm. It is found in the cytoskeleton. It localises to the microtubule organizing center. The protein resides in the centrosome. The protein localises to the centriole. Its subcellular location is the nucleus. It is found in the nucleus envelope. It localises to the nuclear pore complex. Its function is as follows. Plays a fundamental role in microtubule organizing center structure and function. Required for centriole duplication and correct spindle formation. Has a role in regulating cytokinesis and genome stability via cooperation with CALM1 and CCP110. Involved in global genome nucleotide excision repair (GG-NER) by acting as component of the XPC complex. Cooperatively with RAD23B appears to stabilize XPC. In vitro, stimulates DNA binding of the XPC:RAD23B dimer. In terms of biological role, the XPC complex is proposed to represent the first factor bound at the sites of DNA damage and together with other core recognition factors, XPA, RPA and the TFIIH complex, is part of the pre-incision (or initial recognition) complex. The XPC complex recognizes a wide spectrum of damaged DNA characterized by distortions of the DNA helix such as single-stranded loops, mismatched bubbles or single-stranded overhangs. The orientation of XPC complex binding appears to be crucial for inducing a productive NER. XPC complex is proposed to recognize and to interact with unpaired bases on the undamaged DNA strand which is followed by recruitment of the TFIIH complex and subsequent scanning for lesions in the opposite strand in a 5'-to-3' direction by the NER machinery. Cyclobutane pyrimidine dimers (CPDs) which are formed upon UV-induced DNA damage esacpe detection by the XPC complex due to a low degree of structural perurbation. Instead they are detected by the UV-DDB complex which in turn recruits and cooperates with the XPC complex in the respective DNA repair. Functionally, as a component of the TREX-2 complex, involved in the export of mRNAs to the cytoplasm through the nuclear pores. This Bos taurus (Bovine) protein is Centrin-2 (CETN2).